We begin with the raw amino-acid sequence, 300 residues long: Neutral protease NprE (300 aa).

A Ca(2+)-binding site is contributed by Asp139. A Zn(2+)-binding site is contributed by His143. Glu144 is a catalytic residue. Zn(2+) is bound by residues His147 and Glu167. 4 residues coordinate Ca(2+): Asp178, Asp181, Asp183, and Glu186. The Proton donor role is filled by His228.

The protein belongs to the peptidase M4 family. Ca(2+) serves as cofactor. The cofactor is Zn(2+).

Its subcellular location is the secreted. The enzyme catalyses Similar, but not identical, to that of thermolysin.. Extracellular zinc metalloprotease. In Bacillus pumilus (Bacillus mesentericus), this protein is Neutral protease NprE (nprE).